The chain runs to 1960 residues: Myosin-9 (1960 aa).

At Ala2 the chain carries N-acetylalanine. The tract at residues 2 to 838 (AQQAADKYLY…RLFTKVKPLL (837 aa)) is mediates interaction with LIMCH1. Lys8 carries the post-translational modification N6-acetyllysine. Tyr11 is modified (phosphotyrosine). The 51-residue stretch at 27–77 (AAKKLVWVPSDKSGFEPASLKEEVGEEAIVELVENGKKVKVNKDDIQKMNP) folds into the Myosin N-terminal SH3-like domain. The Myosin motor domain maps to 81–776 (SKVEDMAELT…VLAHLEEERD (696 aa)). Lys102 carries the post-translational modification N6-acetyllysine. 174 to 181 (GESGAGKT) contributes to the ATP binding site. Lys299, Lys435, and Lys613 each carry N6-acetyllysine. A Phosphoserine modification is found at Ser628. The segment at 654–676 (LAKLMATLRNTNPNFVRCIIPNH) is actin-binding. Phosphotyrosine is present on Tyr754. The IQ domain occupies 779 to 808 (ITDVIIGFQACCRGYLARKAFAKRQQQLTA). A coiled-coil region spans residues 837-1926 (LLQVSRQEEE…LKNKLRRGDL (1090 aa)). Position 850 is an N6-succinyllysine (Lys850). N6-acetyllysine occurs at positions 860, 975, and 1024. A Phosphoserine modification is found at Ser1114. A disordered region spans residues 1117–1137 (QEDLESERASRNKAEKQKRDL). The segment covering 1122-1137 (SERASRNKAEKQKRDL) has biased composition (basic and acidic residues). N6-acetyllysine occurs at positions 1234, 1249, 1357, 1392, 1404, 1410, 1459, and 1638. Lys1669 is modified (N6-succinyllysine). Ser1714 carries the phosphoserine modification. 3 positions are modified to N6-acetyllysine: Lys1793, Lys1802, and Lys1845. A disordered region spans residues 1877–1918 (RQLEEAEEEAQRANASRRKLQRELEDATETADAMNREVSSLK). Arg1923 is modified (omega-N-methylarginine). The interval 1934–1960 (VARKGAGDCSDEEVDGKADGAEAKAAE) is disordered. The residue at position 1943 (Ser1943) is a Phosphoserine. The span at 1948-1960 (DGKADGAEAKAAE) shows a compositional bias: basic and acidic residues.

Belongs to the TRAFAC class myosin-kinesin ATPase superfamily. Myosin family. In terms of assembly, myosin is a hexameric protein that consists of 2 heavy chain subunits (MHC), 2 alkali light chain subunits (MLC) and 2 regulatory light chain subunits (MLC-2). Interacts with RASIP1. Interacts with DDR1. Interacts with PDLIM2. Interacts with SVIL. Interacts with HTRA3. Interacts with Myo7a. Interacts with CFAP95. Interacts with LIMCH1; independently of the integration of MYH9 into the myosin complex. Interacts with RAB3A. Interacts with ZBED4. Interacts with S100A4; this interaction increases cell motility. Post-translationally, ISGylated. Ubiquitination.

It localises to the cytoplasm. Its subcellular location is the cytoskeleton. The protein localises to the cell cortex. It is found in the cytoplasmic vesicle. The protein resides in the secretory vesicle. It localises to the cortical granule. Functionally, cellular myosin that appears to play a role in cytokinesis, cell shape, and specialized functions such as secretion and capping. Required for cortical actin clearance prior to oocyte exocytosis. Promotes cell motility in conjunction with S100A4. During cell spreading, plays an important role in cytoskeleton reorganization, focal contact formation (in the margins but not the central part of spreading cells), and lamellipodial retraction; this function is mechanically antagonized by MYH10. This Canis lupus familiaris (Dog) protein is Myosin-9 (MYH9).